The following is a 365-amino-acid chain: MDSPDSVRVKCESKGSCSPEEGLNNGLPEEHNQASGGRRRKRPVQRGKPPYSYIALIAMAIANSPERKLTLGGIYKFIMERFPFYRENSKKWQNSIRHNLTLNDCFVKIPREPGHPGKGNYWTLDPAAEDMFDNGSFLRRRKRFKRTDITTYPGYMQNSSAFTPTPTGRASYPNSIYSSVGSGYNPQIHQTHHPAVVHQYYQSPGEAGQGQHRMFSIDSLINQQSLMQPSPGAELTHHSLGLNGNLGNMTNSCSVGDLSCFQTQSISPTGVGSLLNRSSNAVSSNLTYSYSSSPPHLPVPPASYSPNNSQLYGSTSRLAMRSGPCVDHTDQLLSLPGTQINGVCQYNNSSYMRQTHFASGLERYM.

Residues 1–13 show a composition bias toward basic and acidic residues; the sequence is MDSPDSVRVKCES. Positions 1-46 are disordered; it reads MDSPDSVRVKCESKGSCSPEEGLNNGLPEEHNQASGGRRRKRPVQR. The segment at residues 48–142 is a DNA-binding region (fork-head); it reads KPPYSYIALI…DNGSFLRRRK (95 aa).

As to expression, first expressed at the end of gastrulation (stage 13) in the anterior ectodermal placode. During intermediate neural plate stages (stages 14-16), expression expands to the presumptive nasal ectoderm (PNE) and the presumptive lens ectoderm (PLE). By stages 18-21, expression begins to deplete in the PNE, while intensifying in the PLE so that by late neural stages (stages 22), expression is restricted to the PLE. Throughout tailbud stages (stage 23-31), expression is maintained in the lens placode and lens vesicle. In the maturing lens (stage 32-onwards), expression is restricted to the anterior lens epithelium, where it remains during the tadpole stage. In tadpoles there is additional expression in the ventral midline of the pharynx. Expression continues in the adult eye.

Its subcellular location is the nucleus. Functionally, probable transcription factor. Mediates lens formation in the embryo by promoting the proliferation of the specified lens ectoderm and suppressing its terminal differentiation. The polypeptide is Forkhead box protein E4 (Xenopus laevis (African clawed frog)).